The sequence spans 410 residues: Diguanylate cyclase DgcM (410 aa).

2 consecutive PAS domains span residues 3–70 and 129–198; these read THNF…NQHD and GFYA…HLPG. A PAC domain is found at 199–251; sequence GHKPLNFIHKLADGSTRHVQTYAGPIEIYGDKLMLCIVHDITEQKRLEEQLEH. Residues 283–410 form the GGDEF domain; it reads QDYSLLLIDT…NDGRNRVLAA (128 aa). Asp-291 is a binding site for Mg(2+). Positions 299, 304, and 308 each coordinate substrate. Glu-334 is a Mg(2+) binding site. Glu-334 (proton acceptor) is an active-site residue.

The cofactor is Mg(2+).

The catalysed reaction is 2 GTP = 3',3'-c-di-GMP + 2 diphosphate. The protein operates within purine metabolism; 3',5'-cyclic di-GMP biosynthesis. Functionally, part of a signaling cascade that regulates curli biosynthesis. The cascade is composed of two cyclic-di-GMP (c-di-GMP) control modules, in which c-di-GMP controlled by the DgcE/PdeH pair (module I) regulates the activity of the DgcM/PdeR pair (module II), which in turn regulates activity of the transcription factor MlrA and expression of the master biofilm regulator csgD. This chain is Diguanylate cyclase DgcM, found in Escherichia coli O157:H7.